The following is a 393-amino-acid chain: Homeobox protein knotted-1-like 4 (393 aa).

Residues 1-13 (MAFHNNHFNHFTD) are compositionally biased toward polar residues. Disordered regions lie at residues 1 to 39 (MAFHNNHFNHFTDQQQHQPPPPPQQQQQQHFQESAPPNW) and 81 to 114 (QRGNTANNNNNETSGDVIEDVPGGEESMIGEKKE). The 21-residue stretch at 286–306 (ELKHELKQGYKEKIVDIREEI) folds into the ELK domain. A DNA-binding region (homeobox; TALE-type) is located at residues 307-370 (LRKRRAGKLP…NQRKRNWHSN (64 aa)). A disordered region spans residues 363-393 (RKRNWHSNPSSSTVSKNKRRSNAGENSGRDR). Positions 368–377 (HSNPSSSTVS) are enriched in polar residues.

The protein belongs to the TALE/KNOX homeobox family. In terms of assembly, may form heterodimeric complex with the TALE/BELL proteins. Interacts with OFP1, OFP2, OFP4 and OFP12. Interacts with KNATM-B.

The protein localises to the nucleus. The chain is Homeobox protein knotted-1-like 4 (KNAT4) from Arabidopsis thaliana (Mouse-ear cress).